The following is a 96-amino-acid chain: uncharacterized protein (96 aa).

The first 15 residues, 1-15 (MRLFILLVALFVICA), serve as a signal peptide directing secretion.

This is an uncharacterized protein from Caenorhabditis elegans.